A 103-amino-acid polypeptide reads, in one-letter code: MHVKKGDKVKVITGKDKGKSGKVLAAFPKKDRVLIEGINMVKKHTKPSNINPQGGILNVEAPIHVSNVMLIDPKTGEPTRVGYEVKGDKKVRVAKKSGEVIDK.

Belongs to the universal ribosomal protein uL24 family. As to quaternary structure, part of the 50S ribosomal subunit.

Functionally, one of two assembly initiator proteins, it binds directly to the 5'-end of the 23S rRNA, where it nucleates assembly of the 50S subunit. One of the proteins that surrounds the polypeptide exit tunnel on the outside of the subunit. The sequence is that of Large ribosomal subunit protein uL24 from Listeria innocua serovar 6a (strain ATCC BAA-680 / CLIP 11262).